A 399-amino-acid polypeptide reads, in one-letter code: Probable aspartate/prephenate aminotransferase (399 aa).

The L-aspartate site is built by G39, W125, and N175. An N6-(pyridoxal phosphate)lysine modification is found at K239. Residue R375 coordinates L-aspartate.

Belongs to the class-I pyridoxal-phosphate-dependent aminotransferase family. Homodimer. Requires pyridoxal 5'-phosphate as cofactor.

Its subcellular location is the cytoplasm. It catalyses the reaction L-aspartate + 2-oxoglutarate = oxaloacetate + L-glutamate. The catalysed reaction is L-arogenate + 2-oxoglutarate = prephenate + L-glutamate. Its function is as follows. Catalyzes the reversible conversion of aspartate and 2-oxoglutarate to glutamate and oxaloacetate. Can also transaminate prephenate in the presence of glutamate. The polypeptide is Probable aspartate/prephenate aminotransferase (aatA) (Rickettsia bellii (strain RML369-C)).